Here is a 104-residue protein sequence, read N- to C-terminus: Phosphoribosyl-ATP pyrophosphatase (104 aa).

It belongs to the PRA-PH family.

Its subcellular location is the cytoplasm. The enzyme catalyses 1-(5-phospho-beta-D-ribosyl)-ATP + H2O = 1-(5-phospho-beta-D-ribosyl)-5'-AMP + diphosphate + H(+). Its pathway is amino-acid biosynthesis; L-histidine biosynthesis; L-histidine from 5-phospho-alpha-D-ribose 1-diphosphate: step 2/9. The sequence is that of Phosphoribosyl-ATP pyrophosphatase from Rhizobium rhizogenes (strain K84 / ATCC BAA-868) (Agrobacterium radiobacter).